The chain runs to 514 residues: Histidine ammonia-lyase (514 aa).

A cross-link (5-imidazolinone (Cys-Gly)) is located at residues Cys143–Gly145. Position 144 is a 2,3-didehydroalanine (Ser) (Ser144).

The protein belongs to the PAL/histidase family. Post-translationally, contains an active site 4-methylidene-imidazol-5-one (MIO), which is formed autocatalytically by cyclization and dehydration of residues Cys-Ser-Gly.

It is found in the cytoplasm. It catalyses the reaction L-histidine = trans-urocanate + NH4(+). The protein operates within amino-acid degradation; L-histidine degradation into L-glutamate; N-formimidoyl-L-glutamate from L-histidine: step 1/3. The chain is Histidine ammonia-lyase (hutH) from Streptomyces griseus.